Reading from the N-terminus, the 182-residue chain is ATP synthase subunit delta (182 aa).

Belongs to the ATPase delta chain family. In terms of assembly, F-type ATPases have 2 components, F(1) - the catalytic core - and F(0) - the membrane proton channel. F(1) has five subunits: alpha(3), beta(3), gamma(1), delta(1), epsilon(1). F(0) has three main subunits: a(1), b(2) and c(10-14). The alpha and beta chains form an alternating ring which encloses part of the gamma chain. F(1) is attached to F(0) by a central stalk formed by the gamma and epsilon chains, while a peripheral stalk is formed by the delta and b chains.

It localises to the cell inner membrane. Its function is as follows. F(1)F(0) ATP synthase produces ATP from ADP in the presence of a proton or sodium gradient. F-type ATPases consist of two structural domains, F(1) containing the extramembraneous catalytic core and F(0) containing the membrane proton channel, linked together by a central stalk and a peripheral stalk. During catalysis, ATP synthesis in the catalytic domain of F(1) is coupled via a rotary mechanism of the central stalk subunits to proton translocation. In terms of biological role, this protein is part of the stalk that links CF(0) to CF(1). It either transmits conformational changes from CF(0) to CF(1) or is implicated in proton conduction. The protein is ATP synthase subunit delta of Bdellovibrio bacteriovorus (strain ATCC 15356 / DSM 50701 / NCIMB 9529 / HD100).